Reading from the N-terminus, the 456-residue chain is RuvB-like helicase 1 (456 aa).

Residue 70–77 (GPPGTGKT) participates in ATP binding.

This sequence belongs to the RuvB family. As to quaternary structure, forms homohexameric rings. May form a dodecamer with rept made of two stacked hexameric rings. Component of the chromatin remodeling Ino80 complex.

It is found in the nucleus. It carries out the reaction ATP + H2O = ADP + phosphate + H(+). Its function is as follows. Acts as a transcriptional coactivator in Wg signaling. Functionally, proposed core component of the chromatin remodeling Ino80 complex which is involved in transcriptional regulation, DNA replication and probably DNA repair. In Aedes aegypti (Yellowfever mosquito), this protein is RuvB-like helicase 1.